We begin with the raw amino-acid sequence, 186 residues long: UPF0398 protein LCA_0919 (186 aa).

It belongs to the UPF0398 family.

This Latilactobacillus sakei subsp. sakei (strain 23K) (Lactobacillus sakei subsp. sakei) protein is UPF0398 protein LCA_0919.